A 604-amino-acid polypeptide reads, in one-letter code: Elongation factor 4 (604 aa).

The 182-residue stretch at K10–S191 folds into the tr-type G domain. Residues D22–T27 and N138–D141 each bind GTP.

This sequence belongs to the TRAFAC class translation factor GTPase superfamily. Classic translation factor GTPase family. LepA subfamily.

The protein localises to the cell inner membrane. The catalysed reaction is GTP + H2O = GDP + phosphate + H(+). Its function is as follows. Required for accurate and efficient protein synthesis under certain stress conditions. May act as a fidelity factor of the translation reaction, by catalyzing a one-codon backward translocation of tRNAs on improperly translocated ribosomes. Back-translocation proceeds from a post-translocation (POST) complex to a pre-translocation (PRE) complex, thus giving elongation factor G a second chance to translocate the tRNAs correctly. Binds to ribosomes in a GTP-dependent manner. In Helicobacter pylori (strain P12), this protein is Elongation factor 4.